Consider the following 959-residue polypeptide: Isoleucine--tRNA ligase (959 aa).

The short motif at 60–70 is the 'HIGH' region element; the sequence is PYANGSLHMGH. Glu-569 contacts L-isoleucyl-5'-AMP. Residues 610–614 carry the 'KMSKS' region motif; the sequence is KMSKS. ATP is bound at residue Lys-613. Residues Cys-928, Cys-931, Cys-948, and Cys-951 each coordinate Zn(2+).

Belongs to the class-I aminoacyl-tRNA synthetase family. IleS type 1 subfamily. In terms of assembly, monomer. The cofactor is Zn(2+).

It is found in the cytoplasm. It carries out the reaction tRNA(Ile) + L-isoleucine + ATP = L-isoleucyl-tRNA(Ile) + AMP + diphosphate. Its function is as follows. Catalyzes the attachment of isoleucine to tRNA(Ile). As IleRS can inadvertently accommodate and process structurally similar amino acids such as valine, to avoid such errors it has two additional distinct tRNA(Ile)-dependent editing activities. One activity is designated as 'pretransfer' editing and involves the hydrolysis of activated Val-AMP. The other activity is designated 'posttransfer' editing and involves deacylation of mischarged Val-tRNA(Ile). The chain is Isoleucine--tRNA ligase from Crocosphaera subtropica (strain ATCC 51142 / BH68) (Cyanothece sp. (strain ATCC 51142)).